Consider the following 354-residue polypeptide: Dual-specificity RNA methyltransferase RlmN (354 aa).

Glu86 acts as the Proton acceptor in catalysis. Residues 105–338 (RHARYTICVS…CTIRQSKGLD (234 aa)) enclose the Radical SAM core domain. Cys112 and Cys343 are joined by a disulfide. The [4Fe-4S] cluster site is built by Cys119, Cys123, and Cys126. S-adenosyl-L-methionine is bound by residues 169–170 (GE), Ser201, 224–226 (SLH), and Asn300. Catalysis depends on Cys343, which acts as the S-methylcysteine intermediate.

The protein belongs to the radical SAM superfamily. RlmN family. [4Fe-4S] cluster is required as a cofactor.

It localises to the cytoplasm. It catalyses the reaction adenosine(2503) in 23S rRNA + 2 reduced [2Fe-2S]-[ferredoxin] + 2 S-adenosyl-L-methionine = 2-methyladenosine(2503) in 23S rRNA + 5'-deoxyadenosine + L-methionine + 2 oxidized [2Fe-2S]-[ferredoxin] + S-adenosyl-L-homocysteine. It carries out the reaction adenosine(37) in tRNA + 2 reduced [2Fe-2S]-[ferredoxin] + 2 S-adenosyl-L-methionine = 2-methyladenosine(37) in tRNA + 5'-deoxyadenosine + L-methionine + 2 oxidized [2Fe-2S]-[ferredoxin] + S-adenosyl-L-homocysteine. Its function is as follows. Specifically methylates position 2 of adenine 2503 in 23S rRNA and position 2 of adenine 37 in tRNAs. m2A2503 modification seems to play a crucial role in the proofreading step occurring at the peptidyl transferase center and thus would serve to optimize ribosomal fidelity. In Campylobacter fetus subsp. fetus (strain 82-40), this protein is Dual-specificity RNA methyltransferase RlmN.